The sequence spans 258 residues: MTLPVFFGCAFIAFGPAFALYLFTIATDPLRVIFLIAGAFFWLVSLLLSSMFWFLVRVITNNRDESVQNYLLIFGALLSVCIQELFRLAYYKLLKKASEGLKSINPEEDIAPSMRLLAYVSGLGFGIMSGVFSFVNTLSNSLGPGTVGIHGDSPQFFLNSAFMTLVVIMLHVFWGVVFFDGCEKNKWYTLLTVLLTHLVVSTQTFLSPYYEVNLVTAYIIMVLMGIWAFYVAGGSCRSLKFCLLCQDKDFLLYNQRSR.

7 consecutive transmembrane segments (helical) span residues 5–25 (VFFG…LFTI), 32–52 (VIFL…SSMF), 71–91 (LLIF…LAYY), 116–136 (LLAY…SFVN), 161–181 (AFMT…FFDG), 187–207 (WYTL…TFLS), and 214–234 (LVTA…VAGG).

It belongs to the APH-1 family. As to quaternary structure, potential component of the gamma-secretase complex.

It is found in the membrane. Its function is as follows. Potential subunit of the gamma-secretase complex, an endoprotease complex that catalyzes the intramembrane cleavage of integral proteins such as Notch receptors and APP (amyloid-beta precursor protein). In Mus musculus (Mouse), this protein is Putative gamma-secretase subunit APH-1C (Aph1c).